The sequence spans 142 residues: Low molecular weight protein-tyrosine-phosphatase Ptp (142 aa).

Cys10 functions as the Nucleophile in the catalytic mechanism. Arg16 is a catalytic residue. Asp115 acts as the Proton donor in catalysis.

This sequence belongs to the low molecular weight phosphotyrosine protein phosphatase family.

It carries out the reaction O-phospho-L-tyrosyl-[protein] + H2O = L-tyrosyl-[protein] + phosphate. It functions in the pathway glycan metabolism; exopolysaccharide biosynthesis. Its activity is regulated as follows. Inhibited by ammonium molybdate, sodium orthovanadate, N-ethylmaleimide and iodoacetic acid. In terms of biological role, dephosphorylates ptk. May be involved in the production and the transport of exopolysaccharides. The polypeptide is Low molecular weight protein-tyrosine-phosphatase Ptp (ptp) (Acinetobacter johnsonii).